We begin with the raw amino-acid sequence, 529 residues long: Probable threonine/serine exporter (529 aa).

The next 10 membrane-spanning stretches (helical) occupy residues 88-108, 168-188, 212-232, 234-254, 265-285, 312-332, 344-364, 365-385, 389-409, and 428-448; these read ITVT…PVTI, FALG…LAAV, VFGA…AGQD, TALV…VGSM, ALAR…GILI, MPLP…CLTI, AGLS…AGFG, RVVA…LISI, APAL…LAVF, and LLEA…GEFL. Residues 482-501 form a disordered region; it reads QPAKSQQPTGTGGQRWRSVA.

It belongs to the ThrE exporter (TC 2.A.79) family.

Its subcellular location is the cell membrane. It carries out the reaction L-threonine(in) + H(+)(out) = L-threonine(out) + H(+)(in). In terms of biological role, catalyzes the export of L-threonine and L-serine from the cell to the extracellular environment. Export is dependent on the proton motive force. Required for in vitro growth and survival of bacteria inside macrophages. Increased expression is associated with low-level amikacin (AMK) resistance. This is Probable threonine/serine exporter from Mycobacterium tuberculosis (strain ATCC 25618 / H37Rv).